The following is a 350-amino-acid chain: GDSL esterase/lipase At4g10955 (350 aa).

This sequence belongs to the 'GDSL' lipolytic enzyme family.

The protein is GDSL esterase/lipase At4g10955 of Arabidopsis thaliana (Mouse-ear cress).